Reading from the N-terminus, the 202-residue chain is NADH-quinone oxidoreductase subunit C (202 aa).

This sequence belongs to the complex I 30 kDa subunit family. In terms of assembly, NDH-1 is composed of 14 different subunits. Subunits NuoB, C, D, E, F, and G constitute the peripheral sector of the complex.

The protein localises to the cell inner membrane. The enzyme catalyses a quinone + NADH + 5 H(+)(in) = a quinol + NAD(+) + 4 H(+)(out). Its function is as follows. NDH-1 shuttles electrons from NADH, via FMN and iron-sulfur (Fe-S) centers, to quinones in the respiratory chain. The immediate electron acceptor for the enzyme in this species is believed to be ubiquinone. Couples the redox reaction to proton translocation (for every two electrons transferred, four hydrogen ions are translocated across the cytoplasmic membrane), and thus conserves the redox energy in a proton gradient. The sequence is that of NADH-quinone oxidoreductase subunit C from Albidiferax ferrireducens (strain ATCC BAA-621 / DSM 15236 / T118) (Rhodoferax ferrireducens).